The primary structure comprises 1499 residues: Multidrug resistance protein CDR2 (1499 aa).

Residues 1–511 lie on the Cytoplasmic side of the membrane; sequence MSTANTSLSQ…NFLRMKGDPS (511 aa). The 255-residue stretch at 148 to 402 folds into the ABC transporter 1 domain; the sequence is FTTEAINKLK…FENMGWKCPQ (255 aa). Helical transmembrane passes span 512 to 532, 546 to 566, 596 to 616, 621 to 641, 660 to 680, and 763 to 783; these read IPLISILSQLVMGLILASVFF, GALFFSVLFNAFSSLLEILSL, LPVKLLMTMSFNIVYYFMVNL, GNFFFYWLMCASCTLVMSHMF, VFLLAMIIYAGFVLPIPYILG, and FGITVAFAVFFLGVYVALTEF. Topologically, residues 784 to 1193 are cytoplasmic; it reads NKGAMQKGEI…TIVQDWRSPG (410 aa). In terms of domain architecture, ABC transporter 2 spans 857–1101; sequence FFWRDLTYQV…MINYFEKYGA (245 aa). An ATP-binding site is contributed by 893-900; it reads GASGAGKT. 6 helical membrane-spanning segments follow: residues 1194 to 1214, 1229 to 1249, 1279 to 1299, 1315 to 1335, 1354 to 1374, and 1465 to 1485; these read YIYSKLILVISSSLFIGFSFF, AVFMFFVPFTTFIDQMLPYFV, IPFQIVVGTISYFCWYYPVGL, LMWMLLTAFYVYTSTMGQLAI, LCLMFCGVLAGPNVIPGFWIF, and FGIFVAFIGINIILTIFFYWL.

The protein belongs to the ABC transporter superfamily. ABCG family. PDR (TC 3.A.1.205) subfamily.

The protein localises to the membrane. Its function is as follows. Multidrug efflux transporter. Confers resistance to azole antifungal agents, to other antifungals (terbinafine, amorolfine) and to a variety of metabolic inhibitors. The chain is Multidrug resistance protein CDR2 (CDR2) from Candida albicans (strain SC5314 / ATCC MYA-2876) (Yeast).